Here is a 377-residue protein sequence, read N- to C-terminus: Putative holocytochrome-c synthase (377 aa).

Disordered stretches follow at residues 1–29 (MTSS…SNEA) and 111–136 (QNSE…KPAG). Positions 7–22 (TTDHPRTGKCPIDHSK) are enriched in basic and acidic residues. HRM repeat units lie at residues 114 to 119 (EATPAV) and 124 to 129 (TCPMSN).

It belongs to the cytochrome c-type heme lyase family.

It is found in the mitochondrion inner membrane. The protein localises to the mitochondrion intermembrane space. The enzyme catalyses holo-[cytochrome c] = apo-[cytochrome c] + heme b. In terms of biological role, lyase that catalyzes the covalent linking of the heme group to the cytochrome C apoprotein to produce the mature functional cytochrome. The sequence is that of Putative holocytochrome-c synthase from Schizosaccharomyces pombe (strain 972 / ATCC 24843) (Fission yeast).